Reading from the N-terminus, the 296-residue chain is Uricase (296 aa).

Catalysis depends on charge relay system residues lysine 14 and threonine 61. Urate-binding residues include threonine 61, aspartate 62, phenylalanine 163, arginine 180, valine 229, glutamine 230, and asparagine 256. The Charge relay system role is filled by histidine 258.

The protein belongs to the uricase family.

It is found in the peroxisome. Its subcellular location is the cytoplasm. It localises to the nucleus. It carries out the reaction urate + O2 + H2O = 5-hydroxyisourate + H2O2. It participates in purine metabolism; urate degradation; (S)-allantoin from urate: step 1/3. Catalyzes the oxidation of uric acid to 5-hydroxyisourate, which is further processed to form (S)-allantoin. The sequence is that of Uricase from Schizosaccharomyces pombe (strain 972 / ATCC 24843) (Fission yeast).